The chain runs to 237 residues: 5'-methylthioadenosine/S-adenosylhomocysteine nucleosidase (237 aa).

The active-site Proton acceptor is the Glu12. Substrate contacts are provided by residues Ala78, Ile152, and 173 to 174 (ME). The active-site Proton donor is Asp197.

Belongs to the PNP/UDP phosphorylase family. MtnN subfamily. As to quaternary structure, homodimer.

It carries out the reaction S-adenosyl-L-homocysteine + H2O = S-(5-deoxy-D-ribos-5-yl)-L-homocysteine + adenine. The catalysed reaction is S-methyl-5'-thioadenosine + H2O = 5-(methylsulfanyl)-D-ribose + adenine. The enzyme catalyses 5'-deoxyadenosine + H2O = 5-deoxy-D-ribose + adenine. It participates in amino-acid biosynthesis; L-methionine biosynthesis via salvage pathway; S-methyl-5-thio-alpha-D-ribose 1-phosphate from S-methyl-5'-thioadenosine (hydrolase route): step 1/2. Its function is as follows. Catalyzes the irreversible cleavage of the glycosidic bond in both 5'-methylthioadenosine (MTA) and S-adenosylhomocysteine (SAH/AdoHcy) to adenine and the corresponding thioribose, 5'-methylthioribose and S-ribosylhomocysteine, respectively. Also cleaves 5'-deoxyadenosine, a toxic by-product of radical S-adenosylmethionine (SAM) enzymes, into 5-deoxyribose and adenine. Thus, is required for in vivo function of the radical SAM enzymes biotin synthase and lipoic acid synthase, that are inhibited by 5'-deoxyadenosine accumulation. This Hamiltonella defensa subsp. Acyrthosiphon pisum (strain 5AT) protein is 5'-methylthioadenosine/S-adenosylhomocysteine nucleosidase.